We begin with the raw amino-acid sequence, 823 residues long: Sphingomyelin phosphodiesterase 4 (823 aa).

S130 and S245 each carry phosphoserine. T665 bears the Phosphothreonine mark. Phosphoserine is present on S749. A helical membrane pass occupies residues L776 to C796.

Mg(2+) is required as a cofactor. Expressed in skeletal muscle (at protein level). As to expression, expressed in skeletal muscle but a lower levels than isoform 1 (at protein level).

Its subcellular location is the endoplasmic reticulum membrane. It localises to the golgi apparatus membrane. It is found in the nucleus envelope. The protein resides in the cell membrane. The protein localises to the sarcolemma. It carries out the reaction a sphingomyelin + H2O = phosphocholine + an N-acylsphing-4-enine + H(+). With respect to regulation, activated by phosphatidylserine and tumor necrosis factor (TNF). Inhibited by scyphostatin. In terms of biological role, catalyzes the hydrolysis of membrane sphingomyelin to form phosphorylcholine and ceramide. It has a relevant role in the homeostasis of membrane sphingolipids, thereby influencing membrane integrity, and endoplasmic reticulum organization and function. May sensitize cells to DNA damage-induced apoptosis. In skeletal muscle, mediates TNF-stimulated oxidant production. The polypeptide is Sphingomyelin phosphodiesterase 4 (Smpd4) (Mus musculus (Mouse)).